The following is a 226-amino-acid chain: Amelogenin (226 aa).

A signal peptide spans M1–A16. S32 carries the phosphoserine modification. Positions Q86 to M196 are disordered. Low complexity-rich tracts occupy residues H88–P120 and P137–H182. Residues P183–A192 are compositionally biased toward pro residues.

This sequence belongs to the amelogenin family.

The protein localises to the secreted. Its subcellular location is the extracellular space. It is found in the extracellular matrix. Functionally, plays a role in the biomineralization of teeth. Seems to regulate the formation of crystallites during the secretory stage of tooth enamel development. Thought to play a major role in the structural organization and mineralization of developing enamel. The polypeptide is Amelogenin (AMEL) (Cavia porcellus (Guinea pig)).